The chain runs to 91 residues: Small ribosomal subunit protein bS6 (91 aa).

The protein belongs to the bacterial ribosomal protein bS6 family.

Functionally, binds together with bS18 to 16S ribosomal RNA. The chain is Small ribosomal subunit protein bS6 from Leptospira borgpetersenii serovar Hardjo-bovis (strain JB197).